The primary structure comprises 122 residues: Large ribosomal subunit protein uL18 (122 aa).

Belongs to the universal ribosomal protein uL18 family. Part of the 50S ribosomal subunit; part of the 5S rRNA/L5/L18/L25 subcomplex. Contacts the 5S and 23S rRNAs.

In terms of biological role, this is one of the proteins that bind and probably mediate the attachment of the 5S RNA into the large ribosomal subunit, where it forms part of the central protuberance. This is Large ribosomal subunit protein uL18 from Thermotoga neapolitana (strain ATCC 49049 / DSM 4359 / NBRC 107923 / NS-E).